A 325-amino-acid polypeptide reads, in one-letter code: Olfactory receptor 5T18 (325 aa).

The Extracellular portion of the chain corresponds to 1 to 22 (MRNITEATFFVLKGLTDNNELQ). Asn-3 carries an N-linked (GlcNAc...) asparagine glycan. Helical transmembrane passes span 23-43 (IILFLLFLAIYIFTLIGNVGL) and 44-64 (IILVVGDSQLHNPMYCFLSVL). At 65 to 97 (SSVDACYSTDITPNMLVGFMSKSKIISFYGCAT) the chain is on the extracellular side. The cysteines at positions 95 and 187 are disulfide-linked. Residues 98–118 (QMFLAVTFGTTECFLLAAMAY) form a helical membrane-spanning segment. Residues 119–139 (DRYVAIHDPLLYAVSMSPRVY) lie on the Cytoplasmic side of the membrane. The chain crosses the membrane as a helical span at residues 140 to 160 (IPLIIASYAGGIVHAIIHTVA). Residues 161-194 (TFSLSFCRSNEVKHIFCDIPPLLAISCSETYVNE) lie on the Extracellular side of the membrane. The chain crosses the membrane as a helical span at residues 195–215 (LLLFFFVSFIELVTILIVLVS). The Cytoplasmic portion of the chain corresponds to 216-234 (YAFILLSILKMNSSEGRRK). The chain crosses the membrane as a helical span at residues 235 to 255 (VFSTCGAHLTAVSIYYGTILF). Residues 256 to 269 (MYVRPSSNYSLEHD) lie on the Extracellular side of the membrane. A helical transmembrane segment spans residues 270 to 290 (MIVSTFYTIGIPMLNPIIYSL). Over 291–325 (RNKDVKEAMKRVLRKKINIKHRIKKLNDFSVFLMP) the chain is Cytoplasmic.

Belongs to the G-protein coupled receptor 1 family.

Its subcellular location is the cell membrane. In terms of biological role, potential odorant receptor. The polypeptide is Olfactory receptor 5T18 (Mus musculus (Mouse)).